The primary structure comprises 135 residues: Calcium-binding protein KIC (135 aa).

The 36-residue stretch at 74–109 (MSKEDAQGMVREGDLDGDGALNQTEFCVLMVRLSPE) folds into the EF-hand domain. Positions 87, 89, 91, and 98 each coordinate Ca(2+).

Interacts with KCBP (via C-terminus). KIC and calmodulin show competitive binding to KCBP. Interacts with CML42. Binds to ABCG36. Expressed in stems, leaves and flowers.

Its function is as follows. Calcium-binding regulatory protein that interacts with kinesin motor protein KCBP in a calcium-dependent manner. Inhibits KCBP microtubule binding activity and microtubule-stimulated ATPase activity. Involved in the regulation of trichome branching through its interaction with KCBP. The protein is Calcium-binding protein KIC of Arabidopsis thaliana (Mouse-ear cress).